The chain runs to 406 residues: Pyruvate dehydrogenase E1 component subunit beta-3, chloroplastic (406 aa).

The transit peptide at 1 to 70 (MSAILQGAGA…PLIPNAVTTK (70 aa)) directs the protein to the chloroplast. Residue glutamate 142 participates in thiamine diphosphate binding. Positions 195, 243, 244, and 248 each coordinate K(+).

In terms of assembly, tetramer of 2 alpha and 2 beta subunits. The cofactor is thiamine diphosphate.

It localises to the plastid. Its subcellular location is the chloroplast. The enzyme catalyses N(6)-[(R)-lipoyl]-L-lysyl-[protein] + pyruvate + H(+) = N(6)-[(R)-S(8)-acetyldihydrolipoyl]-L-lysyl-[protein] + CO2. Functionally, the pyruvate dehydrogenase complex catalyzes the overall conversion of pyruvate to acetyl-CoA and CO(2). It contains multiple copies of three enzymatic components: pyruvate dehydrogenase (E1), dihydrolipoamide acetyltransferase (E2) and lipoamide dehydrogenase (E3). This chain is Pyruvate dehydrogenase E1 component subunit beta-3, chloroplastic (E1-BETA-2), found in Arabidopsis thaliana (Mouse-ear cress).